The sequence spans 31 residues: Cyclopsychotride-A (31 aa).

The segment at residues Ser1–Asn31 is a cross-link (cyclopeptide (Ser-Asn)). 3 disulfides stabilise this stretch: Cys4–Cys21, Cys8–Cys23, and Cys13–Cys28.

It belongs to the cyclotide family. Bracelet subfamily. Post-translationally, this is a cyclic peptide.

Its function is as follows. Probably participates in a plant defense mechanism. Has antibiotic activity. Inhibits the cytopathic effects and replication of the human immunodeficiency virus. Active against both Gram-positive and Gram-negative bacteria. The protein is Cyclopsychotride-A of Psychotria longipes.